Here is a 387-residue protein sequence, read N- to C-terminus: Succinate--CoA ligase [ADP-forming] subunit beta (387 aa).

One can recognise an ATP-grasp domain in the interval 9-236 (RDLFESYGVP…AAAADPLEAK (228 aa)). ATP-binding positions include lysine 45, 52–54 (GRG), alanine 94, and glutamate 99. 2 residues coordinate Mg(2+): asparagine 191 and aspartate 205. Residues asparagine 256 and 318–320 (GIT) each bind substrate.

Belongs to the succinate/malate CoA ligase beta subunit family. In terms of assembly, heterotetramer of two alpha and two beta subunits. Requires Mg(2+) as cofactor.

The catalysed reaction is succinate + ATP + CoA = succinyl-CoA + ADP + phosphate. It carries out the reaction GTP + succinate + CoA = succinyl-CoA + GDP + phosphate. Its pathway is carbohydrate metabolism; tricarboxylic acid cycle; succinate from succinyl-CoA (ligase route): step 1/1. In terms of biological role, succinyl-CoA synthetase functions in the citric acid cycle (TCA), coupling the hydrolysis of succinyl-CoA to the synthesis of either ATP or GTP and thus represents the only step of substrate-level phosphorylation in the TCA. The beta subunit provides nucleotide specificity of the enzyme and binds the substrate succinate, while the binding sites for coenzyme A and phosphate are found in the alpha subunit. The protein is Succinate--CoA ligase [ADP-forming] subunit beta of Clavibacter michiganensis subsp. michiganensis (strain NCPPB 382).